A 657-amino-acid chain; its full sequence is N-acetylgalactosaminyltransferase 7 (657 aa).

Residues 1 to 6 (MRLKIG) lie on the Cytoplasmic side of the membrane. The helical; Signal-anchor for type II membrane protein transmembrane segment at 7-29 (FILRSLLVVGSFLGLVVLWSSLT) threads the bilayer. At 30-657 (PRPDDPSPLS…KWEMNNIHSV (628 aa)) the chain is on the lumenal side. Positions 31 to 65 (RPDDPSPLSRMREDRDVNDPMPNRGGNGLAPGEDR) are disordered. 5 disulfide bridges follow: cysteine 197-cysteine 435, cysteine 426-cysteine 507, cysteine 545-cysteine 562, cysteine 585-cysteine 600, and cysteine 625-cysteine 640. The tract at residues 206 to 317 (LLTSSVVIVF…VNWYAPLVAP (112 aa)) is catalytic subdomain A. The substrate site is built by aspartate 247 and arginine 277. The Mn(2+) site is built by aspartate 301 and histidine 303. The interval 381–443 (PYRSPAMAGG…PCSRVGHIYR (63 aa)) is catalytic subdomain B. Tryptophan 412 provides a ligand contact to substrate. Histidine 440 contributes to the Mn(2+) binding site. Arginine 443 is a binding site for substrate. In terms of domain architecture, Ricin B-type lectin spans 532–652 (VDWGEIRGFE…SKTTQKWEMN (121 aa)).

Belongs to the glycosyltransferase 2 family. GalNAc-T subfamily. The cofactor is Mn(2+). As to expression, widely expressed. Expressed in uterus, retina, kidney, small intestine, omentum, stomach and CNS.

It is found in the golgi apparatus membrane. The catalysed reaction is L-seryl-[protein] + UDP-N-acetyl-alpha-D-galactosamine = a 3-O-[N-acetyl-alpha-D-galactosaminyl]-L-seryl-[protein] + UDP + H(+). The enzyme catalyses L-threonyl-[protein] + UDP-N-acetyl-alpha-D-galactosamine = a 3-O-[N-acetyl-alpha-D-galactosaminyl]-L-threonyl-[protein] + UDP + H(+). It participates in protein modification; protein glycosylation. Its function is as follows. Glycopeptide transferase involved in O-linked oligosaccharide biosynthesis, which catalyzes the transfer of an N-acetyl-D-galactosamine residue to an already glycosylated peptide. In contrast to other proteins of the family, it does not act as a peptide transferase that transfers GalNAc onto serine or threonine residue on the protein receptor, but instead requires the prior addition of a GalNAc on a peptide before adding additional GalNAc moieties. Some peptide transferase activity is however not excluded, considering that its appropriate peptide substrate may remain unidentified. This Homo sapiens (Human) protein is N-acetylgalactosaminyltransferase 7 (GALNT7).